The primary structure comprises 116 residues: Non-specific lipid-transfer protein (116 aa).

A signal peptide spans 1–25; that stretch reads MAKMAMMVLCAGVTCMVVGAPYTEA. 4 disulfide bridges follow: cysteine 28–cysteine 75, cysteine 38–cysteine 52, cysteine 53–cysteine 98, and cysteine 73–cysteine 112.

This sequence belongs to the plant LTP family.

Functionally, plant non-specific lipid-transfer proteins transfer phospholipids as well as galactolipids across membranes. May play a role in wax or cutin deposition in the cell walls of expanding epidermal cells and certain secretory tissues. The sequence is that of Non-specific lipid-transfer protein from Helianthus annuus (Common sunflower).